A 464-amino-acid polypeptide reads, in one-letter code: uncharacterized protein (464 aa).

Positions 13–71 (MLKVSDIIQIKIDKIVFGGEGLGYYNGFAVFVPMSIPEDELEIEIISIKKTYARGLIKN) constitute a TRAM domain. Residues glutamine 295, tyrosine 324, glutamate 345, and aspartate 393 each contribute to the S-adenosyl-L-methionine site. The active-site Nucleophile is cysteine 420.

Belongs to the class I-like SAM-binding methyltransferase superfamily. RNA M5U methyltransferase family.

This is an uncharacterized protein from Fusobacterium nucleatum subsp. nucleatum (strain ATCC 25586 / DSM 15643 / BCRC 10681 / CIP 101130 / JCM 8532 / KCTC 2640 / LMG 13131 / VPI 4355).